A 128-amino-acid polypeptide reads, in one-letter code: Small ribosomal subunit protein bS6 (128 aa).

Belongs to the bacterial ribosomal protein bS6 family.

Binds together with bS18 to 16S ribosomal RNA. The chain is Small ribosomal subunit protein bS6 from Thermotoga petrophila (strain ATCC BAA-488 / DSM 13995 / JCM 10881 / RKU-1).